The primary structure comprises 285 residues: Golgi to ER traffic protein 2 (285 aa).

Residues 1 to 10 (MSELTEAEKR) show a composition bias toward basic and acidic residues. The segment at 1 to 71 (MSELTEAEKR…HSATPDIKED (71 aa)) is disordered. N-acetylserine is present on serine 2. The Cytoplasmic segment spans residues 2–148 (SELTEAEKRR…LDYHDYLLNR (147 aa)). The span at 11-20 (RLLRERRQKK) shows a compositional bias: basic residues. The span at 24 to 42 (GGASSRLNKITGQASSHLN) shows a compositional bias: polar residues. Position 45 is a phosphoserine (serine 45). Residues 49 to 60 (APSAAKATPPAS) show a composition bias toward low complexity. The chain crosses the membrane as a helical span at residues 149 to 169 (LKAWTILVKWVFFLLPYLYLI). Residues 170–196 (TRPNSSVWPAYAFTQSAWFAPLRNPSN) lie on the Lumenal side of the membrane. Asparagine 173 and asparagine 196 each carry an N-linked (GlcNAc...) asparagine glycan. A helical membrane pass occupies residues 197–216 (FTRIFATFEFLSISIYYQLL). At 217-263 (KNVEHKSKIKNLQDTNKLVKLVSLVPEGVIPVANLKGKLITLLQYWD) the chain is on the cytoplasmic side. Residues 264–284 (LLSMLITDISFVLIVLGLLTY) traverse the membrane as a helical segment. Residue leucine 285 is a topological domain, lumenal.

It belongs to the GET2 family. Component of the Golgi to ER traffic (GET) complex, which is composed of GET1, GET2 and GET3. Within the complex, GET1 and GET2 form a heterotetramer which is stabilized by phosphatidylinositol binding and which binds to the GET3 homodimer.

The protein resides in the endoplasmic reticulum membrane. The protein localises to the golgi apparatus membrane. Required for the post-translational delivery of tail-anchored (TA) proteins to the endoplasmic reticulum. Together with GET1, acts as a membrane receptor for soluble GET3, which recognizes and selectively binds the transmembrane domain of TA proteins in the cytosol. The GET complex cooperates with the HDEL receptor ERD2 to mediate the ATP-dependent retrieval of resident ER proteins that contain a C-terminal H-D-E-L retention signal from the Golgi to the ER. Involved in DNA replication and DNA damage response and also in cell wall function. This is Golgi to ER traffic protein 2 from Saccharomyces cerevisiae (strain YJM789) (Baker's yeast).